Consider the following 127-residue polypeptide: Aspartate 1-decarboxylase (127 aa).

The active-site Schiff-base intermediate with substrate; via pyruvic acid is Ser25. Ser25 carries the post-translational modification Pyruvic acid (Ser). Residue Thr57 participates in substrate binding. Tyr58 serves as the catalytic Proton donor. 73–75 contributes to the substrate binding site; the sequence is GAA.

Belongs to the PanD family. As to quaternary structure, heterooctamer of four alpha and four beta subunits. Requires pyruvate as cofactor. In terms of processing, is synthesized initially as an inactive proenzyme, which is activated by self-cleavage at a specific serine bond to produce a beta-subunit with a hydroxyl group at its C-terminus and an alpha-subunit with a pyruvoyl group at its N-terminus.

Its subcellular location is the cytoplasm. It carries out the reaction L-aspartate + H(+) = beta-alanine + CO2. The protein operates within cofactor biosynthesis; (R)-pantothenate biosynthesis; beta-alanine from L-aspartate: step 1/1. Catalyzes the pyruvoyl-dependent decarboxylation of aspartate to produce beta-alanine. The protein is Aspartate 1-decarboxylase of Neisseria gonorrhoeae (strain ATCC 700825 / FA 1090).